A 597-amino-acid polypeptide reads, in one-letter code: Probable E3 ubiquitin-protein ligase ARI1 (597 aa).

Residues 119–333 (SQMSCDVCME…IAGHSCGRYQ (215 aa)) form a TRIAD supradomain region. Zn(2+)-binding residues include cysteine 123, cysteine 126, cysteine 140, histidine 142, cysteine 145, cysteine 148, cysteine 167, cysteine 172, cysteine 214, cysteine 220, cysteine 236, cysteine 238, cysteine 243, cysteine 246, histidine 251, cysteine 256, cysteine 283, and cysteine 286. Residues 123 to 172 (CDVCMEDLPGDHMTRMDCGHCFCNNCWTEHFTVQINEGQSKRIRCMAHQC) form an RING-type 1 zinc finger. The segment at 194–256 (AKFDRYLLES…LCQAHSPCSC (63 aa)) adopts an IBR-type zinc-finger fold. The RING-type 2; atypical zinc finger occupies 283–311 (CPKCYKPVEKNGGCNLVRCICGQCFCWLC). Cysteine 296 is an active-site residue. Positions 301, 303, 308, 311, 319, and 329 each coordinate Zn(2+). The disordered stretch occupies residues 536-575 (FQPLDSGTSGVTSRPEQASGSRSSEDTICSSSQKRPKKEG). Polar residues predominate over residues 540-568 (DSGTSGVTSRPEQASGSRSSEDTICSSSQ).

It belongs to the RBR family. Ariadne subfamily. The cofactor is Zn(2+). As to expression, ubiquitous.

The enzyme catalyses [E2 ubiquitin-conjugating enzyme]-S-ubiquitinyl-L-cysteine + [acceptor protein]-L-lysine = [E2 ubiquitin-conjugating enzyme]-L-cysteine + [acceptor protein]-N(6)-ubiquitinyl-L-lysine.. Its pathway is protein modification; protein ubiquitination. Might act as an E3 ubiquitin-protein ligase, or as part of E3 complex, which accepts ubiquitin from specific E2 ubiquitin-conjugating enzymes and then transfers it to substrates. This chain is Probable E3 ubiquitin-protein ligase ARI1 (ARI1), found in Arabidopsis thaliana (Mouse-ear cress).